The primary structure comprises 512 residues: 2-isopropylmalate synthase (512 aa).

Residues 5-268 enclose the Pyruvate carboxyltransferase domain; the sequence is LIIFDTTLRD…DIGIDTQQIL (264 aa). Aspartate 14, histidine 202, histidine 204, and asparagine 239 together coordinate Mn(2+). The interval 394–512 is regulatory domain; the sequence is GFVSLSQHSE…SKADRVAAQG (119 aa).

This sequence belongs to the alpha-IPM synthase/homocitrate synthase family. LeuA type 1 subfamily. Homodimer. The cofactor is Mn(2+).

The protein localises to the cytoplasm. The catalysed reaction is 3-methyl-2-oxobutanoate + acetyl-CoA + H2O = (2S)-2-isopropylmalate + CoA + H(+). It participates in amino-acid biosynthesis; L-leucine biosynthesis; L-leucine from 3-methyl-2-oxobutanoate: step 1/4. Catalyzes the condensation of the acetyl group of acetyl-CoA with 3-methyl-2-oxobutanoate (2-ketoisovalerate) to form 3-carboxy-3-hydroxy-4-methylpentanoate (2-isopropylmalate). The protein is 2-isopropylmalate synthase of Polaromonas naphthalenivorans (strain CJ2).